We begin with the raw amino-acid sequence, 224 residues long: Deoxyguanosine kinase (224 aa).

8–16 (GPIGAGKSS) contributes to the ATP binding site. Substrate contacts are provided by Glu32, Tyr44, and Gln55. Asp78 serves as the catalytic Proton acceptor. Residues Arg79, Asp84, and Glu149 each contribute to the substrate site.

This sequence belongs to the DCK/DGK family. In terms of assembly, heterodimer of a deoxyadenosine (DAK) and a deoxyguanosine kinase (DGK).

It carries out the reaction 2'-deoxyguanosine + ATP = dGMP + ADP + H(+). DGK/DAK plays an essential role in generating the deoxyribonucleotide precursors, dGTP and dATP, for DNA metabolism. The sequence is that of Deoxyguanosine kinase from Lactobacillus johnsonii (strain CNCM I-12250 / La1 / NCC 533).